The sequence spans 769 residues: Spastin (769 aa).

The disordered stretch occupies residues 1–100 (MVRTKNQSSS…TSGNVPRGGQ (100 aa)). At 1 to 113 (MVRTKNQSSS…KQNLYVVSFP (113 aa)) the chain is on the cytoplasmic side. Positions 1–201 (MVRTKNQSSS…QTLEMAASRG (201 aa)) are required for localization to punctate cytoplasmic foci. Over residues 8–19 (SSSSSASSSTKS) the composition is skewed to low complexity. Gly residues predominate over residues 24–33 (SGGGGGGGGS). Positions 54 to 63 (SSKLSSNRQR) are enriched in polar residues. Over residues 64–78 (TTTTITTTTTTPGSS) the composition is skewed to low complexity. An intramembrane region (helical) is located at residues 114–134 (IIFLFNVLRSLIYQLFCIFRY). Topologically, residues 135–769 (LYGASTKVIY…WSQDYGDITI (635 aa)) are cytoplasmic. The segment at 199–769 (SRGGTGAGGY…WSQDYGDITI (571 aa)) is sufficient for interaction with microtubules and microtubule severing. Positions 224–299 (HRRAFEYISK…SMARDRLHFL (76 aa)) constitute an MIT domain. Positions 314-462 (KEQPKKQLPH…NAASGSGSGA (149 aa)) are disordered. Positions 334 to 344 (TTTSSGSSSSS) are enriched in low complexity. Polar residues-rich tracts occupy residues 395-413 (NKSQ…STSV) and 434-450 (QFSS…RTPI). Low complexity predominate over residues 451–462 (NNNAASGSGSGA). The segment at 452-466 (NNAASGSGSGASTPL) is required for interaction with microtubules. 534-541 (GPPGNGKT) lines the ATP pocket.

The protein belongs to the AAA ATPase family. Spastin subfamily. In terms of assembly, homohexamer. The homohexamer is stabilized by ATP-binding. The homohexamer may adopt a ring conformation through which microtubules pass prior to being severed. Interacts with microtubules. Interacts with atl; may be involved in microtubule dynamics.

It localises to the membrane. The protein resides in the cytoplasm. The protein localises to the cytoskeleton. It is found in the microtubule organizing center. Its subcellular location is the centrosome. It localises to the chromosome. The protein resides in the lipid droplet. The enzyme catalyses n ATP + n H2O + a microtubule = n ADP + n phosphate + (n+1) alpha/beta tubulin heterodimers.. In terms of biological role, ATP-dependent microtubule severing protein. Stimulates microtubule minus-end depolymerization and poleward microtubule flux in the mitotic spindle. Regulates microtubule stability in the neuromuscular junction synapse. Involved in lipid metabolism by regulating the size and distribution of lipid droplets. Involved in axon regeneration by regulating microtubule severing. This is Spastin from Drosophila virilis (Fruit fly).